The primary structure comprises 121 residues: 18 kDa learning-associated protein of slug (121 aa).

Disordered regions lie at residues 44–67 (TMKT…GSME) and 95–121 (AVKK…AIKW). A compositionally biased stretch (polar residues) spans 45–64 (MKTTEPIQENKTSEGTSTDG).

This sequence belongs to the learning-associated protein family. In terms of tissue distribution, expressed predominantly in cerebral ganglia (at protein level). The mRNA is highly expressed in cerebral ganglia, and is detected at lower levels in visceral-pedal ganglia, head, and body, but is not detected in the tail.

Its subcellular location is the cytoplasm. The protein localises to the secreted. Functionally, may be involved in modulating long-term memory formation and retention, at least with respect to odor-taste associative learning. In Lehmannia marginata (Tree slug), this protein is 18 kDa learning-associated protein of slug.